We begin with the raw amino-acid sequence, 111 residues long: Ig kappa chain V-III region PC 2880/PC 1229 (111 aa).

Positions 1–23 are framework-1; sequence DIVLTQSPASLAVSLGQRATISC. Cysteine 23 and cysteine 92 are disulfide-bonded. The tract at residues 24–38 is complementarity-determining-1; sequence RASESVDNYGISFMN. The interval 39–53 is framework-2; the sequence is WFQQKPGQPPKLLIY. The segment at 54-60 is complementarity-determining-2; the sequence is AASNQGS. Residues 61 to 92 are framework-3; the sequence is GVPARFSGSGSGTDFSLNIHPMEEDDTAMYFC. The tract at residues 93–101 is complementarity-determining-3; sequence QQSKEVPWT. Positions 102–111 are framework-4; the sequence is FGGGTKLEIK.

This chain is Ig kappa chain V-III region PC 2880/PC 1229, found in Mus musculus (Mouse).